Reading from the N-terminus, the 529-residue chain is MPLDPGCLNGRVMKCLTFFLLLPETLKKSRKSARAQGKVQACYEIVPLALKKKMAAELYPASANTNIANSNATANAKKNALQLQHTAPPPPQLHNLNNNNIESSNWQSFHPTLRERNALMFNNELMADVHFIVGPAGASKKVPAHKYILAVGSSVFYAMFYGDLAEVKSEIHIPDVEPAAFLILLKYLYSDEIDLEADTVLATLYAAKKYIVPALAKACVNFLETSLEAKNACVLLSQSRLFEEPDLTLRCWEVIDAQAELALKSEGFCEIDLPTLEIIVTRETLNTKEDVVFEAVLNWAEAECKRQGLPITPVNKRNVLGKALYLVRIPTMTLEEFANGAAQSDILTLEETRSIFLWYTAANKPQLEFPLIKRKGLAPQRCHRFQSSAYRSNQWRYRGRCDSIQFAVDKRIFIAGLGLYGSSCGKAEYSVKIELKRQGVVLAQNLTKFVSDGCSNTFSVWFEHPVQVEQDTFYTVSAILDGNELSYFGQEGMTEVQCGKVTFQFQCSSDSTNGTGVQGGQIPELIFYA.

Residues 127-197 enclose the BTB domain; the sequence is ADVHFIVGPA…LYSDEIDLEA (71 aa).

In terms of assembly, homodimer and heterodimer. Interacts with cul3 via the BTB domain.

It localises to the cytoplasm. Adapter protein for the cul3 E3 ubiquitin-protein ligase complex. Involved in late neuronal development and muscle formation. The sequence is that of BTB/POZ domain-containing protein 6 (btbd6) from Xenopus laevis (African clawed frog).